Reading from the N-terminus, the 206-residue chain is Large ribosomal subunit protein uL3 (206 aa).

The interval 127-151 (SGGPSSHGSKFHRHLGGTGQATTPA) is disordered.

It belongs to the universal ribosomal protein uL3 family. As to quaternary structure, part of the 50S ribosomal subunit. Forms a cluster with proteins L14 and L19.

Functionally, one of the primary rRNA binding proteins, it binds directly near the 3'-end of the 23S rRNA, where it nucleates assembly of the 50S subunit. The sequence is that of Large ribosomal subunit protein uL3 from Borreliella afzelii (strain PKo) (Borrelia afzelii).